The sequence spans 246 residues: Sensory transduction protein LytT (246 aa).

The region spanning 4-120 (HIMIAEDERL…RFKIAMNRIR (117 aa)) is the Response regulatory domain. Position 55 is a 4-aspartylphosphate (Asp55). Residues 136–243 (LVVNLDEKMM…AKGLFDALQG (108 aa)) enclose the HTH LytTR-type domain.

Post-translationally, phosphorylated by LytS.

It is found in the cytoplasm. Member of the two-component regulatory system LytS/LytT that probably regulates genes involved in cell wall metabolism. In Oceanobacillus iheyensis (strain DSM 14371 / CIP 107618 / JCM 11309 / KCTC 3954 / HTE831), this protein is Sensory transduction protein LytT (lytT).